The sequence spans 559 residues: MGARALRRERRLRWSPNWTRILPMQPQKTLTAGQALVRLLANYGVDTVFGIPGVHTLELYRGLPGSGIRHVLTRHEQGAGFMADGYARVSGKPGVCFVITGPGVTNVATAIGQAYADSVPLLVISSVNHSASLGKGWGCLHETQDQRAMTAPITAFSALALSPEQLPELIARAYAVFDSERPRPVHISIPLDVLAAPVAHDWSAAVARRPGRGVPCSEALRAAAERLAAARRPMLIAGGGALAAGEALAALSERLAAPLFTSVAGKGLLPPDAPLNAGASLCVAPGWEMIAEADLVLAVGTEMADTDFWRERLPLSGELIRVDIDPRKFNDFYPSAVALRGDARQTLEALLVRLPQEARDSAPAAARVARLRAEIRAAHAPLQALHQAILDRIAAALPADAFVSTDMTQLAYTGNYAFASRAPRSWLHPTGYGTLGYGLPAGIGAKLGAPQRPGLVLVGDGGFLYTAQELATASEELDSPLVVLLWNNDALGQIRDDMLGLDIEPVGVLPRNPDFALLGRAYGCAVRQPQDLDELERDLRAGFGQSGVTLIELRHACAR.

E76 provides a ligand contact to thiamine diphosphate.

This sequence belongs to the TPP enzyme family. It depends on thiamine diphosphate as a cofactor.

It catalyses the reaction 5-guanidino-2-oxopentanoate + H(+) = 4-guanidinobutanal + CO2. The protein operates within amino-acid degradation; L-arginine degradation. In terms of biological role, catalyzes the decarboxylation of 2-ketoarginine, leading to the formation of 4-guanidinobutyraldehyde. The polypeptide is Probable 2-ketoarginine decarboxylase AruI (aruI) (Pseudomonas aeruginosa (strain ATCC 15692 / DSM 22644 / CIP 104116 / JCM 14847 / LMG 12228 / 1C / PRS 101 / PAO1)).